The primary structure comprises 266 residues: Small ribosomal subunit protein eS1 (266 aa).

The disordered stretch occupies residues 237 to 266; it reads DGGSKTGEVGETGSKVDRPEGYEPPVQETV.

The protein belongs to the eukaryotic ribosomal protein eS1 family. As to quaternary structure, component of the small ribosomal subunit. Mature ribosomes consist of a small (40S) and a large (60S) subunit. The 40S subunit contains about 33 different proteins and 1 molecule of RNA (18S). The 60S subunit contains about 49 different proteins and 3 molecules of RNA (28S, 5.8S and 5S).

It localises to the cytoplasm. The sequence is that of Small ribosomal subunit protein eS1 from Lysiphlebus testaceipes (Greenbugs aphid parastoid).